A 165-amino-acid polypeptide reads, in one-letter code: Crossover junction endodeoxyribonuclease RuvC (165 aa).

Catalysis depends on residues D7, E66, and D138. 3 residues coordinate Mg(2+): D7, E66, and D138.

The protein belongs to the RuvC family. In terms of assembly, homodimer which binds Holliday junction (HJ) DNA. The HJ becomes 2-fold symmetrical on binding to RuvC with unstacked arms; it has a different conformation from HJ DNA in complex with RuvA. In the full resolvosome a probable DNA-RuvA(4)-RuvB(12)-RuvC(2) complex forms which resolves the HJ. Mg(2+) is required as a cofactor.

Its subcellular location is the cytoplasm. It catalyses the reaction Endonucleolytic cleavage at a junction such as a reciprocal single-stranded crossover between two homologous DNA duplexes (Holliday junction).. Functionally, the RuvA-RuvB-RuvC complex processes Holliday junction (HJ) DNA during genetic recombination and DNA repair. Endonuclease that resolves HJ intermediates. Cleaves cruciform DNA by making single-stranded nicks across the HJ at symmetrical positions within the homologous arms, yielding a 5'-phosphate and a 3'-hydroxyl group; requires a central core of homology in the junction. The consensus cleavage sequence is 5'-(A/T)TT(C/G)-3'. Cleavage occurs on the 3'-side of the TT dinucleotide at the point of strand exchange. HJ branch migration catalyzed by RuvA-RuvB allows RuvC to scan DNA until it finds its consensus sequence, where it cleaves and resolves the cruciform DNA. This Ruegeria pomeroyi (strain ATCC 700808 / DSM 15171 / DSS-3) (Silicibacter pomeroyi) protein is Crossover junction endodeoxyribonuclease RuvC.